The chain runs to 332 residues: RNA polymerase sigma-B factor (332 aa).

The short motif at D125–V138 is the Polymerase core binding element. A DNA-binding region (H-T-H motif) is located at residues L294–K313.

The protein belongs to the sigma-70 factor family.

Sigma factors are initiation factors that promote the attachment of RNA polymerase to specific initiation sites and are then released. This is RNA polymerase sigma-B factor (sigB) from Nostoc sp. (strain PCC 7120 / SAG 25.82 / UTEX 2576).